We begin with the raw amino-acid sequence, 410 residues long: Solute carrier family 52, riboflavin transporter, member 3 (410 aa).

Transmembrane regions (helical) follow at residues 3-23 (ILIY…INGL), 40-60 (LPSY…LVTL), and 73-93 (VVIY…AFFL). The N-linked (GlcNAc...) asparagine glycan is linked to N157. Transmembrane regions (helical) follow at residues 158–178 (FTTE…LAAF), 239–259 (FQLT…NGLL), 277–297 (LSAA…MFFP), 301–321 (LVFL…NMAM), 334–354 (ALGE…LSYV), and 369–389 (ALVW…VIMF).

The protein belongs to the riboflavin transporter family.

The protein localises to the cell membrane. It catalyses the reaction riboflavin(in) = riboflavin(out). Plasma membrane transporter mediating the uptake by cells of the water soluble vitamin B2/riboflavin that plays a key role in biochemical oxidation-reduction reactions of the carbohydrate, lipid, and amino acid metabolism. The chain is Solute carrier family 52, riboflavin transporter, member 3 (slc52a3) from Osmerus mordax (Rainbow smelt).